A 662-amino-acid polypeptide reads, in one-letter code: Protein Aster-C (662 aa).

Positions Met1–Val33 are disordered. Positions Glu70–Val176 constitute a GRAM domain. The tract at residues Val212–Lys294 is disordered. Positions Val240–Ala250 are enriched in polar residues. A compositionally biased stretch (basic and acidic residues) spans Leu265 to Val276. The 172-residue stretch at Gln326 to Ser497 folds into the VASt domain. The segment at His506–Arg530 is disordered. A compositionally biased stretch (basic residues) spans Ser507–Leu516. A helical transmembrane segment spans residues Leu557–Leu577.

In terms of tissue distribution, highly expressed in the liver. Also found in the testis.

The protein resides in the endoplasmic reticulum membrane. Its subcellular location is the cell membrane. Cholesterol transporter that mediates non-vesicular transport of cholesterol from the plasma membrane (PM) to the endoplasmic reticulum (ER). Contains unique domains for binding cholesterol and the PM, thereby serving as a molecular bridge for the transfer of cholesterol from the PM to the ER. Plays a crucial role in cholesterol homeostasis and has the unique ability to localize to the PM based on the level of membrane cholesterol. In lipid-poor conditions localizes to the ER membrane and in response to excess cholesterol in the PM is recruited to the endoplasmic reticulum-plasma membrane contact sites (EPCS) which is mediated by the GRAM domain. At the EPCS, the sterol-binding VASt/ASTER domain binds to the cholesterol in the PM and facilitates its transfer from the PM to ER. In Mus musculus (Mouse), this protein is Protein Aster-C (Gramd1c).